Here is a 382-residue protein sequence, read N- to C-terminus: p21-activated protein kinase-interacting protein 1 (382 aa).

5 WD repeats span residues 37-77 (THHS…EHGA), 80-120 (HHAG…KTFK), 122-160 (HRGH…SAFI), 202-240 (TNGK…CLCE), and 243-284 (AHEN…KVPP). Residues 313–382 (LPPAAEPCPD…MSEKKRKKKM (70 aa)) are disordered. Residues 352 to 363 (DSKQPTKGNSPV) are compositionally biased toward polar residues. The segment covering 365–382 (AKKRKMATMSEKKRKKKM) has biased composition (basic residues).

Interacts with PAK1.

It localises to the nucleus. The protein localises to the nucleolus. Negatively regulates the PAK1 kinase. PAK1 is a member of the PAK kinase family, which has been shown to play a positive role in the regulation of signaling pathways involving MAPK8 and RELA. PAK1 exists as an inactive homodimer, which is activated by binding of small GTPases such as CDC42 to an N-terminal regulatory domain. PAK1IP1 also binds to the N-terminus of PAK1, and inhibits the specific activation of PAK1 by CDC42. May be involved in ribosomal large subunit assembly. The polypeptide is p21-activated protein kinase-interacting protein 1 (Pak1ip1) (Mus musculus (Mouse)).